Here is a 166-residue protein sequence, read N- to C-terminus: NAD(P)H-quinone oxidoreductase subunit I, chloroplastic (166 aa).

4Fe-4S ferredoxin-type domains lie at 55–84 (GRIH…VDWK) and 95–124 (LNYS…MTEE). 8 residues coordinate [4Fe-4S] cluster: cysteine 64, cysteine 67, cysteine 70, cysteine 74, cysteine 104, cysteine 107, cysteine 110, and cysteine 114.

This sequence belongs to the complex I 23 kDa subunit family. As to quaternary structure, NDH is composed of at least 16 different subunits, 5 of which are encoded in the nucleus. The cofactor is [4Fe-4S] cluster.

It is found in the plastid. It localises to the chloroplast thylakoid membrane. It catalyses the reaction a plastoquinone + NADH + (n+1) H(+)(in) = a plastoquinol + NAD(+) + n H(+)(out). The enzyme catalyses a plastoquinone + NADPH + (n+1) H(+)(in) = a plastoquinol + NADP(+) + n H(+)(out). NDH shuttles electrons from NAD(P)H:plastoquinone, via FMN and iron-sulfur (Fe-S) centers, to quinones in the photosynthetic chain and possibly in a chloroplast respiratory chain. The immediate electron acceptor for the enzyme in this species is believed to be plastoquinone. Couples the redox reaction to proton translocation, and thus conserves the redox energy in a proton gradient. This Lasianthaea macrocephala (Lipochaeta macrocephala) protein is NAD(P)H-quinone oxidoreductase subunit I, chloroplastic.